We begin with the raw amino-acid sequence, 228 residues long: Probable septum site-determining protein MinC (228 aa).

This sequence belongs to the MinC family. Interacts with MinD and FtsZ.

Functionally, cell division inhibitor that blocks the formation of polar Z ring septums. Rapidly oscillates between the poles of the cell to destabilize FtsZ filaments that have formed before they mature into polar Z rings. Prevents FtsZ polymerization. This Yersinia pseudotuberculosis serotype O:1b (strain IP 31758) protein is Probable septum site-determining protein MinC.